We begin with the raw amino-acid sequence, 376 residues long: Alcohol dehydrogenase 6 (376 aa).

The Zn(2+) site is built by cysteine 47, histidine 69, cysteine 99, cysteine 102, cysteine 105, cysteine 113, and cysteine 175. Residues 200 to 205, aspartate 224, arginine 229, 293 to 295, and arginine 371 contribute to the NAD(+) site; these read GLGGVG and VGA.

Belongs to the zinc-containing alcohol dehydrogenase family. Class-V subfamily. Dimer. Zn(2+) is required as a cofactor.

It is found in the cytoplasm. It carries out the reaction a primary alcohol + NAD(+) = an aldehyde + NADH + H(+). It catalyses the reaction a secondary alcohol + NAD(+) = a ketone + NADH + H(+). Its function is as follows. Alcohol dehydrogenase. Catalyzes the NAD-dependent oxidation of primary alcohols to the corresponding aldehydes. Oxidizes secondary alcohols to the corresponding ketones. The polypeptide is Alcohol dehydrogenase 6 (Adh6) (Rattus norvegicus (Rat)).